A 172-amino-acid chain; its full sequence is Cytochrome b6-f complex iron-sulfur subunit (172 aa).

A helical membrane pass occupies residues 19 to 39 (LNALLSGSVGVVVVGALYPVV). In terms of domain architecture, Rieske spans 61–161 (GKPISVSELL…ATVDGDNVRF (101 aa)). The [2Fe-2S] cluster site is built by cysteine 107, histidine 109, cysteine 125, and histidine 128. Cysteine 112 and cysteine 127 are disulfide-bonded.

The protein belongs to the Rieske iron-sulfur protein family. As to quaternary structure, the 4 large subunits of the cytochrome b6-f complex are cytochrome b6, subunit IV (17 kDa polypeptide, PetD), cytochrome f and the Rieske protein, while the 4 small subunits are PetG, PetL, PetM and PetN. The complex functions as a dimer. The cofactor is [2Fe-2S] cluster.

It localises to the cellular thylakoid membrane. The enzyme catalyses 2 oxidized [plastocyanin] + a plastoquinol + 2 H(+)(in) = 2 reduced [plastocyanin] + a plastoquinone + 4 H(+)(out). Its function is as follows. Component of the cytochrome b6-f complex, which mediates electron transfer between photosystem II (PSII) and photosystem I (PSI), cyclic electron flow around PSI, and state transitions. This Synechococcus sp. (strain JA-2-3B'a(2-13)) (Cyanobacteria bacterium Yellowstone B-Prime) protein is Cytochrome b6-f complex iron-sulfur subunit.